A 158-amino-acid chain; its full sequence is MVPKLFTSQICLLPLLGLLSAEGSPHARPQQYSRAQWFSIQHIQTAPLHCTSAMRAINKYQSRCKNKNTFLHTTFADVVNVCGNTNMTCPHNASLNNCHHSGVQVPLTYCNLTGPQTISNCVYSSTQANKFYVVACENRDPRDPPQYPVVPVHLDTII.

The first 27 residues, Met-1–Ala-27, serve as a signal peptide directing secretion. His-42 (proton acceptor) is an active-site residue. The residue at position 60 (Tyr-60) is a 3'-nitrotyrosine. Position 65-69 (Lys-65–Thr-69) interacts with substrate. Asn-86, Asn-92, and Asn-111 each carry an N-linked (GlcNAc...) asparagine glycan. Catalysis depends on His-153, which acts as the Proton donor.

This sequence belongs to the pancreatic ribonuclease family. In terms of assembly, interacts with and forms a tight 1:1 complex with RNH1. Dimerization of two such complexes may occur.

It localises to the lysosome. Its subcellular location is the cytoplasmic granule. It catalyses the reaction an [RNA] containing cytidine + H2O = an [RNA]-3'-cytidine-3'-phosphate + a 5'-hydroxy-ribonucleotide-3'-[RNA].. The enzyme catalyses an [RNA] containing uridine + H2O = an [RNA]-3'-uridine-3'-phosphate + a 5'-hydroxy-ribonucleotide-3'-[RNA].. This is a non-secretory ribonuclease. It is a pyrimidine specific nuclease with a slight preference for U. Cytotoxin and helminthotoxin. Possesses a wide variety of biological activities. The protein is Non-secretory ribonuclease (RNASE2) of Callithrix jacchus (White-tufted-ear marmoset).